A 279-amino-acid polypeptide reads, in one-letter code: Pantothenate synthetase (279 aa).

26–33 (MGNLHDGH) is a binding site for ATP. Histidine 33 functions as the Proton donor in the catalytic mechanism. Glutamine 57 is a (R)-pantoate binding site. Glutamine 57 is a binding site for beta-alanine. Residue 144-147 (GKKD) coordinates ATP. Glutamine 150 serves as a coordination point for (R)-pantoate. ATP-binding positions include valine 173 and 181 to 184 (LSSR).

It belongs to the pantothenate synthetase family. As to quaternary structure, homodimer.

It localises to the cytoplasm. It catalyses the reaction (R)-pantoate + beta-alanine + ATP = (R)-pantothenate + AMP + diphosphate + H(+). It participates in cofactor biosynthesis; (R)-pantothenate biosynthesis; (R)-pantothenate from (R)-pantoate and beta-alanine: step 1/1. Catalyzes the condensation of pantoate with beta-alanine in an ATP-dependent reaction via a pantoyl-adenylate intermediate. The polypeptide is Pantothenate synthetase (Burkholderia mallei (strain NCTC 10229)).